A 61-amino-acid polypeptide reads, in one-letter code: UPF0434 protein Nmul_A1027 (61 aa).

The protein belongs to the UPF0434 family.

The chain is UPF0434 protein Nmul_A1027 from Nitrosospira multiformis (strain ATCC 25196 / NCIMB 11849 / C 71).